The following is a 303-amino-acid chain: Acetylglutamate kinase (303 aa).

Residues 67–68 (GG), Arg89, and Asn193 contribute to the substrate site.

It belongs to the acetylglutamate kinase family. ArgB subfamily.

It is found in the cytoplasm. It carries out the reaction N-acetyl-L-glutamate + ATP = N-acetyl-L-glutamyl 5-phosphate + ADP. It participates in amino-acid biosynthesis; L-arginine biosynthesis; N(2)-acetyl-L-ornithine from L-glutamate: step 2/4. Catalyzes the ATP-dependent phosphorylation of N-acetyl-L-glutamate. In Acinetobacter baylyi (strain ATCC 33305 / BD413 / ADP1), this protein is Acetylglutamate kinase.